The sequence spans 54 residues: Apelin receptor early endogenous ligand (54 aa).

The first 23 residues, 1-23 (MRFQPLFWVFFIFAMSLLFISEQ), serve as a signal peptide directing secretion.

This sequence belongs to the Elabela/Toddler family. Interacts with APLNR. Expressed in the placenta. Expressed in syncytiotrophoblasts of the placenta labyrinth at 10.5 dpc. Expressed in placental chorionic trophoblasts (at protein level). Expressed in a small population of epiblast cells in the distal half of the embryo at 7 dpc. Expressed in newly formed definitive endoderm cells in the proximal half of the embryo, while it is not present in extra-embryonic endoderm at 7.5 dpc. This expression pattern then changes to the ventral aspect of the developing foregut pocket and the entire hindgut pocket at 8.5 dpc, before becoming restricted to the foregut overlying the heart and the posterior-most hindgut. Not detected in endothelial precursor cells of the yolk sac at 8 dpc. Expressed in extraembryonic tissues as well as in the chorion at 8.25 dpc. Expressed in endometrial stroma of the uterus of pregnant mice at 8.5 dpc. Expressed in the developing heart, caudal neural tube and trophobasts at 9 dpc. Expressed in the chorionic plate of the chorioallantoic placenta at 9 dpc. Expressed in the posterior half of the ventral neural tube at 9.25 dpc. Expressed in trophoblast cells at the periphery of the placenta at 9.5 dpc. Expressed in collecting ducts of the kidney of pregnant mice at 10.5 dpc. Expressed in the epicardium of the developing heart at 11.5 dpc. Expressed weakly in the adult heart. Expressed in endothelial cells and fibroblasts and weakly in cardiomyocytes.

The protein resides in the secreted. The protein localises to the extracellular space. In terms of biological role, peptide hormone that functions as endogenous ligand for the G-protein-coupled apelin receptor (APLNR/APJ), that plays a role in the regulation of normal cardiovascular function and fluid homeostasis. Functions as a balanced agonist activating both G(i) protein pathway and beta-arrestin pathway of APLNR. Downstream G proteins activation, apelin can inhibit cAMP production and activate key intracellular effectors such as ERKs. On the other hand, APLNR activation induces beta-arrestin recruitment to the membrane leading to desensitization and internalization of the receptor. Required for mesendodermal differentiation, blood vessels formation and heart morphogenesis during early development and for adult cardiovascular homeostasis. Acts as a motogen by promoting mesendodermal cell migration during gastrulation by binding and activating APLNR. Acts as an early embryonic regulator of cellular movement with a role in migration and development of cardiac progenitor cells. May act as a chemoattractant for the activation of angioblast migration toward the embryonic midline, i.e. the position of the future vessel formation, during vasculogenesis. Positively regulates sinus venosus (SV)-derived endothelial cells migration into the developing heart to promote coronary blood vessel sprouting. Plays a role in placental vascular development; promotes placental trophoblast invasion and spiral artery remodeling in the uterus. Involved in the regulation of maternal cardiovascular homeostasis to prevent gestational hypertension and for potent cardioprotective functions during heart failure. Mediates myocardial contractility in an ERK1/2-dependent manner. This Mus musculus (Mouse) protein is Apelin receptor early endogenous ligand.